The sequence spans 747 residues: Catalase-peroxidase (747 aa).

The first 27 residues, 1–27 (MRKFSVSKVALLAATMAPALLPAAARA), serve as a signal peptide directing secretion. The tryptophyl-tyrosyl-methioninium (Trp-Tyr) (with M-264) cross-link spans 116–238 (WHSAGTYRTA…LAAVQMGLIY (123 aa)). His-117 (proton acceptor) is an active-site residue. A cross-link (tryptophyl-tyrosyl-methioninium (Tyr-Met) (with W-116)) is located at residues 238–264 (YVNPEGPNGNPDPLLAAKDIRETFGRM). His-279 contributes to the heme b binding site.

It belongs to the peroxidase family. Peroxidase/catalase subfamily. In terms of assembly, homodimer or homotetramer. Heme b is required as a cofactor. Formation of the three residue Trp-Tyr-Met cross-link is important for the catalase, but not the peroxidase activity of the enzyme.

It catalyses the reaction H2O2 + AH2 = A + 2 H2O. The enzyme catalyses 2 H2O2 = O2 + 2 H2O. In terms of biological role, bifunctional enzyme with both catalase and broad-spectrum peroxidase activity. The chain is Catalase-peroxidase from Novosphingobium aromaticivorans (strain ATCC 700278 / DSM 12444 / CCUG 56034 / CIP 105152 / NBRC 16084 / F199).